The following is a 146-amino-acid chain: Prolactin-inducible protein homolog (146 aa).

Residues 1–28 (MRALQFLLRVSPAFLLLVLCLQLEINKA) form the signal peptide. Cystine bridges form between Cys65–Cys91 and Cys89–Cys123. N-linked (GlcNAc...) asparagine glycosylation occurs at Asn105.

Belongs to the PIP family. As to quaternary structure, monomer. Interacts with AZGP1.

It is found in the secreted. This is Prolactin-inducible protein homolog (PIP) from Oryctolagus cuniculus (Rabbit).